The primary structure comprises 447 residues: ATP-dependent protease ATPase subunit HslU (447 aa).

Residues isoleucine 17, 59 to 64 (GVGKTE), aspartate 256, glutamate 321, and arginine 393 contribute to the ATP site.

Belongs to the ClpX chaperone family. HslU subfamily. In terms of assembly, a double ring-shaped homohexamer of HslV is capped on each side by a ring-shaped HslU homohexamer. The assembly of the HslU/HslV complex is dependent on binding of ATP.

The protein localises to the cytoplasm. Functionally, ATPase subunit of a proteasome-like degradation complex; this subunit has chaperone activity. The binding of ATP and its subsequent hydrolysis by HslU are essential for unfolding of protein substrates subsequently hydrolyzed by HslV. HslU recognizes the N-terminal part of its protein substrates and unfolds these before they are guided to HslV for hydrolysis. The protein is ATP-dependent protease ATPase subunit HslU of Pseudomonas entomophila (strain L48).